The primary structure comprises 855 residues: Homeobox-leucine zipper protein HOX33 (855 aa).

The segment at 1–21 is disordered; it reads MAAAAVGGRGERLSSSSPTAA. Positions 26-89 form a DNA-binding region, homeobox; it reads DAGKYVRYTP…NRRCREKQRK (64 aa). Residues 84–126 adopt a coiled-coil conformation; sequence REKQRKEASRLQTVNRKLNAMNKLLMEENDRLQKQVSRLVYEN. Positions 168–390 constitute an START domain; it reads DANNPAGLLA…LRHIRQIAHE (223 aa).

It belongs to the HD-ZIP homeobox family. Class III subfamily. In terms of tissue distribution, expressed in seedlings, roots, stems, leaf sheaths and blades and panicles.

The protein resides in the nucleus. Probable transcription factor. The sequence is that of Homeobox-leucine zipper protein HOX33 (HOX33) from Oryza sativa subsp. indica (Rice).